The primary structure comprises 691 residues: MESESSQDDWSAFDPMSREYYDQVGNRYTNESGQKLIMEAPLPPKDEKEQRATRQAKYPYLVVPKSSPYVTEKMLINFFGRALIKEMEFRRLSRVYFVYFENIASLETAQQRVQRYPNLIKCITGRPQKEREITSDPVTSTEPMPTPGPAISATERTPVNHNREVPISTGGQNHPEFFRPPLVTKDDYKRGSLLATNDPIQRYLNVKYEFALERHDIYKLKDETRIPQVVLHFRSGRTIPLSTVAVTEEDKTKSLLEDGVSKCVVCQNWTDTFCKLCKMPFCNASCFADVAEQHKQACGKGEILNLDEKVGRKYPKPGLPPSGSKVRITAFEQTNVVYVRSADIQIDIAYYTVLTEVMMLGKDASKLQSTPVCGQIVLYKFEGHMSRAMVLNVDNIKEIYVVFIDFGSVEVTQLERLYECSSYLAGLTCYPVAVKLRGVPRRFVGPNIREVMYELDQSLVFNIKYSSREYDTSKGMQVVVMTEIDINRSLNRLFKTILTPVEPSVSDLGYKEDCLPYIPLHCGKNINVVVMDNTFIQCGFIYCTSIDLAYEVTKMQRDIQEYGEKIAKCATYAPPINELCIAKYEGKWRRGLSVELVGDGYPSILFIDYGNIVPTHVTDIRPYPPQFIFPIMTTQLDLIGVPEKPTDEQIKWLDKNYPIGSVITCSEITFDEETNSYSTRIEKLQEFLSLD.

Residues 128 to 155 are disordered; the sequence is QKEREITSDPVTSTEPMPTPGPAISATE. Tudor domains follow at residues 366 to 427 and 573 to 630; these read KLQS…LAGL and APPI…FIFP.

In terms of assembly, interacts with aub and piwi. Gonad-specific.

The protein resides in the cytoplasm. It localises to the cytoplasmic ribonucleoprotein granule. In terms of biological role, gonad-specific protein essential for germline development to repress transposable elements and preventing their mobilization, which is essential for the germline integrity. Acts via the piRNA metabolic process in both germline and somatic gonadal tissues by mediating the repression of transposable elements during meiosis. Required for primary piRNA biogenesis in both germline and somatic gonadal tissues. The chain is Protein vreteno (vret) from Drosophila melanogaster (Fruit fly).